The primary structure comprises 326 residues: Nucleoporin NUP57 (326 aa).

The segment covering 1-10 (MFSSLNTRPA) has biased composition (polar residues). The disordered stretch occupies residues 1–52 (MFSSLNTRPAGQSLFGANTGGGLFGQSLANQPQQQQQPLQQQQQQAAPALGQ). An SLFG repeat occupies 13–17 (SLFGA). The stretch at 22–25 (GLFG) is one GLFG repeat. Positions 25–52 (GQSLANQPQQQQQPLQQQQQQAAPALGQ) are enriched in low complexity. 2 coiled-coil regions span residues 218 to 239 (ALSGDEDELKQKLQQIDKTLND) and 280 to 321 (EEIE…HNPA).

This sequence belongs to the nucleoporin GLFG family. In terms of assembly, component of the nuclear pore complex (NPC). NPC constitutes the exclusive means of nucleocytoplasmic transport. NPCs allow the passive diffusion of ions and small molecules and the active, nuclear transport receptor-mediated bidirectional transport of macromolecules such as proteins, RNAs, ribonucleoparticles (RNPs), and ribosomal subunits across the nuclear envelope. Due to its 8-fold rotational symmetry, all subunits are present with 8 copies or multiples thereof.

The protein resides in the nucleus. Its subcellular location is the nuclear pore complex. It localises to the nucleus membrane. Functions as a component of the nuclear pore complex (NPC). NPC components, collectively referred to as nucleoporins (NUPs), can play the role of both NPC structural components and of docking or interaction partners for transiently associated nuclear transport factors. Active directional transport is assured by both, a Phe-Gly (FG) repeat affinity gradient for these transport factors across the NPC and a transport cofactor concentration gradient across the nuclear envelope (GSP1 and GSP2 GTPases associated predominantly with GTP in the nucleus, with GDP in the cytoplasm). NUP57 plays an important role in several nuclear transport pathways including poly(A)+ RNA, tRNA, and pre-ribosome transport. This is Nucleoporin NUP57 (NUP57) from Chaetomium thermophilum (strain DSM 1495 / CBS 144.50 / IMI 039719) (Thermochaetoides thermophila).